The primary structure comprises 38 residues: MKVRASVKKICRNCKMVRRNGVLRVICSVEPRHKQRQG.

This sequence belongs to the bacterial ribosomal protein bL36 family.

This Cellvibrio japonicus (strain Ueda107) (Pseudomonas fluorescens subsp. cellulosa) protein is Large ribosomal subunit protein bL36.